We begin with the raw amino-acid sequence, 299 residues long: Oxygen-dependent coproporphyrinogen-III oxidase (299 aa).

S92 contributes to the substrate binding site. The a divalent metal cation site is built by H96 and H106. H106 (proton donor) is an active-site residue. N108–R110 contributes to the substrate binding site. Residues H145 and H175 each contribute to the a divalent metal cation site. The important for dimerization stretch occupies residues Y240–E275. G258–R260 is a substrate binding site.

Belongs to the aerobic coproporphyrinogen-III oxidase family. As to quaternary structure, homodimer. It depends on a divalent metal cation as a cofactor.

The protein resides in the cytoplasm. It catalyses the reaction coproporphyrinogen III + O2 + 2 H(+) = protoporphyrinogen IX + 2 CO2 + 2 H2O. Its pathway is porphyrin-containing compound metabolism; protoporphyrin-IX biosynthesis; protoporphyrinogen-IX from coproporphyrinogen-III (O2 route): step 1/1. Involved in the heme biosynthesis. Catalyzes the aerobic oxidative decarboxylation of propionate groups of rings A and B of coproporphyrinogen-III to yield the vinyl groups in protoporphyrinogen-IX. This Shigella flexneri protein is Oxygen-dependent coproporphyrinogen-III oxidase.